Here is a 509-residue protein sequence, read N- to C-terminus: Group 3 secretory phospholipase A2 (509 aa).

Residues 1–19 (MGVQAGLFGMLGFLGVALG) form the signal peptide. The disordered stretch occupies residues 123 to 149 (ESPAGARKKRAAGQSGVPGGGHQREKR). Residues 150-291 (GWTMPGTLWC…SWSSRATSPT (142 aa)) are phospholipase A2-like. Ca(2+)-binding residues include Trp-158, Gly-160, and Gly-162. 4 disulfides stabilise this stretch: Cys-159-Cys-181, Cys-180-Cys-220, Cys-187-Cys-213, and Cys-211-Cys-244. The N-linked (GlcNAc...) asparagine glycan is linked to Asn-167. His-184 is an active-site residue. Position 185 (Asp-185) interacts with Ca(2+). Residue Asp-214 is part of the active site. Asn-280 carries an N-linked (GlcNAc...) asparagine glycan. The segment at 283–354 (WSSRATSPTP…LQGPQGGLKP (72 aa)) is disordered. Residues 284 to 296 (SSRATSPTPSSRS) are compositionally biased toward low complexity. Residues 302–322 (PRQKQHLRKGPPHQKGSKRPS) are compositionally biased toward basic residues. N-linked (GlcNAc...) asparagine glycans are attached at residues Asn-325, Asn-396, and Asn-439. The disordered stretch occupies residues 458–482 (QQRRHQLQDKGTDERQPWPSEPLRG). A compositionally biased stretch (basic and acidic residues) spans 463 to 473 (QLQDKGTDERQ).

This sequence belongs to the phospholipase A2 family. It depends on Ca(2+) as a cofactor. In terms of processing, N-glycosylation does not affect the catalytic activity, but is required for proper secretion. A nonglycosylated form is observed in several cell types. In several cell types, the N- and C-termini are cleaved off. Expressed in kidney, heart, liver, and skeletal muscle. Also present in placenta and peripheral blood leukocytes. Not detected in colon, thymus, spleen and small intestine. In lung, expressed in bronchial epithelial cells and alveolar macrophages, but scarcely detected in alveolar epithelium, arterial walls and interstitial fibroblasts (at protein level). In joints of osteoarthritis and rheumatoid arthritis, expressed in endothelial cells (at protein level). In normal heart, detected in some vessels. In myocardial tissues with acute infarction, expressed in vascular endothelial cells adjacent to cardiomyocytes and those in lesions with granulation. Expression in cardiomyocytes is scarce (at protein level). In uterus, breast and colon cancers, detected in tumor cells and neighboring microvascular endothelium, but not in normal glandular tissues (at protein level). Expressed in dermal resting mast cells (at protein level) and pulmonary mast cells. Expressed in neuronal fibers (at protein level). Highly expressed in dorsal root ganglia neurons (at protein level). Expressed in Purkinje cells in cerebellum (at protein level). In stomach is preferentially expressed in neuronal fibers and in microvascular endothelium. Sparsely expressed in normal aorta (at protein level). Highly expressed in macrophages and smooth muscle cells in aorta with atheroma.

It is found in the secreted. Its subcellular location is the cell membrane. It localises to the cytoplasm. The protein localises to the cytoskeleton. The protein resides in the microtubule organizing center. It is found in the centrosome. Its subcellular location is the centriole. It localises to the recycling endosome. It carries out the reaction a 1,2-diacyl-sn-glycero-3-phosphocholine + H2O = a 1-acyl-sn-glycero-3-phosphocholine + a fatty acid + H(+). The catalysed reaction is 1-hexadecanoyl-2-(9Z,12Z-octadecadienoyl)-sn-glycero-3-phosphocholine + H2O = (9Z,12Z)-octadecadienoate + 1-hexadecanoyl-sn-glycero-3-phosphocholine + H(+). It catalyses the reaction 1-hexadecanoyl-2-(5Z,8Z,11Z,14Z-eicosatetraenoyl)-sn-glycero-3-phosphocholine + H2O = 1-hexadecanoyl-sn-glycero-3-phosphocholine + (5Z,8Z,11Z,14Z)-eicosatetraenoate + H(+). The enzyme catalyses 1-hexadecanoyl-2-(9Z,12Z-octadecadienoyl)-sn-glycero-3-phosphoethanolamine + H2O = 1-hexadecanoyl-sn-glycero-3-phosphoethanolamine + (9Z,12Z)-octadecadienoate + H(+). It carries out the reaction 1-hexadecanoyl-2-(5Z,8Z,11Z,14Z-eicosatetraenoyl)-sn-glycero-3-phosphoethanolamine + H2O = 1-hexadecanoyl-sn-glycero-3-phosphoethanolamine + (5Z,8Z,11Z,14Z)-eicosatetraenoate + H(+). Arachidonic acid release is markedly increased by glypican, a glycosylphosphatidylinositol-anchored heparan sulfate proteoglycan. Its function is as follows. Secretory calcium-dependent phospholipase A2 that primarily targets extracellular phospholipids. Hydrolyzes the ester bond of the fatty acyl group attached at sn-2 position of phospholipids without apparent head group selectivity. Contributes to phospholipid remodeling of low-density lipoprotein (LDL) and high-density lipoprotein (HDL) particles. Hydrolyzes LDL phospholipids releasing unsaturated fatty acids that regulate macrophage differentiation toward foam cells. May act in an autocrine and paracrine manner. Secreted by immature mast cells, acts on nearby fibroblasts upstream to PTDGS to synthesize prostaglandin D2 (PGD2), which in turn promotes mast cell maturation and degranulation via PTGDR. Secreted by epididymal epithelium, acts on immature sperm cells within the duct, modulating the degree of unsaturation of the fatty acyl components of phosphatidylcholines required for acrosome assembly and sperm cell motility. Facilitates the replacement of fatty acyl chains in phosphatidylcholines in sperm membranes from omega-6 and omega-9 to omega-3 polyunsaturated fatty acids (PUFAs). Coupled to lipoxygenase pathway, may process omega-6 PUFAs to generate oxygenated lipid mediators in the male reproductive tract. At pericentrosomal preciliary compartment, negatively regulates ciliogenesis likely by regulating endocytotic recycling of ciliary membrane protein. Coupled to cyclooxygenase pathway provides arachidonate to generate prostaglandin E2 (PGE2), a potent immunomodulatory lipid in inflammation and tumorigenesis. At colonic epithelial barrier, preferentially hydrolyzes phospholipids having arachidonate and docosahexaenoate at sn-2 position, contributing to the generation of oxygenated metabolites involved in colonic stem cell homeostasis. Releases C16:0 and C18:0 lysophosphatidylcholine subclasses from neuron plasma membranes and promotes neurite outgrowth and neuron survival. This is Group 3 secretory phospholipase A2 from Homo sapiens (Human).